Consider the following 198-residue polypeptide: Guanylate kinase (198 aa).

Residues G8–V188 form the Guanylate kinase-like domain. An ATP-binding site is contributed by G15–S22.

Belongs to the guanylate kinase family.

It localises to the cytoplasm. It catalyses the reaction GMP + ATP = GDP + ADP. Essential for recycling GMP and indirectly, cGMP. In Mycobacterium sp. (strain MCS), this protein is Guanylate kinase.